The primary structure comprises 275 residues: NH(3)-dependent NAD(+) synthetase (275 aa).

47–54 provides a ligand contact to ATP; the sequence is GISGGQDS. Asp-53 serves as a coordination point for Mg(2+). Arg-141 contributes to the deamido-NAD(+) binding site. Position 161 (Thr-161) interacts with ATP. Residue Glu-166 participates in Mg(2+) binding. Deamido-NAD(+) contacts are provided by Lys-174 and Asp-181. 2 residues coordinate ATP: Lys-190 and Thr-212. 261–262 lines the deamido-NAD(+) pocket; it reads HK.

It belongs to the NAD synthetase family. Homodimer.

It carries out the reaction deamido-NAD(+) + NH4(+) + ATP = AMP + diphosphate + NAD(+) + H(+). Its pathway is cofactor biosynthesis; NAD(+) biosynthesis; NAD(+) from deamido-NAD(+) (ammonia route): step 1/1. Catalyzes the ATP-dependent amidation of deamido-NAD to form NAD. Uses ammonia as a nitrogen source. The protein is NH(3)-dependent NAD(+) synthetase of Lactiplantibacillus plantarum (strain ATCC BAA-793 / NCIMB 8826 / WCFS1) (Lactobacillus plantarum).